An 879-amino-acid chain; its full sequence is Metabotropic glutamate receptor 3 (879 aa).

The first 22 residues, 1 to 22 (MKMLTRLQVLTLALFSKGFLLS), serve as a signal peptide directing secretion. The Extracellular portion of the chain corresponds to 23–576 (LGDHNFLRRE…EDYIRWEDAW (554 aa)). A disulfide bridge links Cys57 with Cys99. L-glutamate is bound by residues Ser151 and 172–174 (AST). Asn209 is a glycosylation site (N-linked (GlcNAc...) asparagine). Tyr222 is an L-glutamate binding site. Disulfide bonds link Cys240-Cys527, Cys361-Cys373, Cys412-Cys419, Cys509-Cys528, Cys513-Cys531, Cys534-Cys546, and Cys549-Cys562. Asn292 carries an N-linked (GlcNAc...) asparagine glycan. Asp301 provides a ligand contact to L-glutamate. An L-glutamate-binding site is contributed by Lys389. N-linked (GlcNAc...) asparagine glycosylation is found at Asn414 and Asn439. The chain crosses the membrane as a helical span at residues 577 to 599 (VIGPVTIACLGFMCTCMVVTVFI). Over 600–613 (KHNNTPLVKASGRE) the chain is Cytoplasmic. The helical transmembrane segment at 614-634 (LCYILLFGVGLSYCMTFFFIA) threads the bilayer. Over 635 to 645 (KPSPVICALRR) the chain is Extracellular. Residues 646–664 (LGLGSSFAICYSALLTKTN) form a helical membrane-spanning segment. Over 665–688 (CIARIFDGVKNGAQRPKFISPSSQ) the chain is Cytoplasmic. The chain crosses the membrane as a helical span at residues 689-709 (VFICLGLILVQIVMVSVWLIL). The Extracellular segment spans residues 710-734 (EAPGTRRYTLAEKRETVILKCNVKD). The helical transmembrane segment at 735–756 (SSMLISLTYDVILVILCTVYAF) threads the bilayer. Residues 757–769 (KTRKCPENFNEAK) lie on the Cytoplasmic side of the membrane. A helical membrane pass occupies residues 770-792 (FIGFTMYTTCIIWLAFLPIFYVT). Topologically, residues 793 to 802 (SSDYRVQTTT) are extracellular. A helical membrane pass occupies residues 803 to 828 (MCISVSLSGFVVLGCLFAPKVHIILF). Residues 829-879 (QPQKNVVTHRLHLNRFSVSGTGTTYSQSSASTYVPTVCNGREVLDSTTSSL) lie on the Cytoplasmic side of the membrane.

Belongs to the G-protein coupled receptor 3 family. In terms of assembly, interacts with TAMALIN.

The protein localises to the cell membrane. G-protein coupled receptor for glutamate. Ligand binding causes a conformation change that triggers signaling via guanine nucleotide-binding proteins (G proteins) and modulates the activity of down-stream effectors. Signaling inhibits adenylate cyclase activity. The polypeptide is Metabotropic glutamate receptor 3 (GRM3) (Pongo abelii (Sumatran orangutan)).